We begin with the raw amino-acid sequence, 3075 residues long: Laminin subunit alpha-1 (3075 aa).

The N-terminal stretch at 1 to 17 (MRGGVLLVLLLCVAAQC) is a signal peptide. One can recognise a Laminin N-terminal domain in the interval 18–269 (RQRGLFPAIL…SIKDISVGGM (252 aa)). Intrachain disulfides connect C270/C279, C272/C290, C292/C301, C304/C324, C327/C336, C329/C361, C364/C373, C376/C394, C397/C409, C399/C427, C429/C438, C441/C451, C454/C467, C456/C471, C473/C482, and C485/C500. Laminin EGF-like domains lie at 270–326 (CICY…TCEA), 327–396 (CNCH…PCRP), 397–453 (CNCD…TCVS), and 454–502 (CGCN…GCSE). Positions 503 to 512 (CFCFGVSDVC) constitute a Laminin EGF-like 5; first part domain. The region spanning 516–708 (SWPVGQVNSM…DLVVAADVEH (193 aa)) is the Laminin IV type A 1 domain. An N-linked (GlcNAc...) asparagine glycan is attached at N665. Residues 709 to 741 (CECPQGYTGTSCESCLSGYYRVDGILFGGICQP) form the Laminin EGF-like 5; second part domain. Cystine bridges form between C742/C751, C744/C757, C760/C769, C772/C788, C791/C806, C793/C816, C819/C828, C831/C846, C849/C863, C851/C870, C873/C882, C885/C899, C902/C914, C904/C921, C923/C932, C935/C948, C951/C963, C953/C969, C971/C980, C983/C995, C998/C1007, C1000/C1014, C1016/C1025, C1028/C1041, C1044/C1056, C1046/C1063, C1065/C1074, C1077/C1087, C1090/C1102, C1092/C1118, C1120/C1129, and C1132/C1147. Laminin EGF-like domains are found at residues 742–790 (CECH…DCQP), 791–848 (CACP…SCVP), 849–901 (CDCS…NCRA), 902–950 (CECH…GCRP), 951–997 (CNCS…SCTP), 998–1043 (CDCP…GCQA), 1044–1089 (CNCS…DCVP), and 1090–1149 (CDCD…GCSP). The 10-residue stretch at 1150–1159 (CFCSGLSHLC) folds into the Laminin EGF-like 14; first part domain. The 192-residue stretch at 1170 to 1361 (VTLGSDQPLL…EEEVASLLEN (192 aa)) folds into the Laminin IV type A 2 domain. Residues 1362 to 1402 (CVCPPGTVGFSCQDCAPGYHRGKLPAGSDRGPRPLVAPCVP) enclose the Laminin EGF-like 14; second part domain. Disulfide bonds link C1403–C1412, C1405–C1419, C1422–C1431, C1434–C1449, C1452–C1466, C1454–C1476, C1479–C1488, C1491–C1506, C1509–C1521, C1511–C1528, C1530–C1539, and C1542–C1553. 3 consecutive Laminin EGF-like domains span residues 1403-1451 (CSCN…DCAL), 1452-1508 (CACP…SCQK), and 1509-1555 (CDCN…DCVS). The interval 1556–2116 (CDDECVGVLL…SQARKQAASI (561 aa)) is domain II and I. N-linked (GlcNAc...) asparagine glycosylation is found at N1579, N1689, N1717, N2047, and N2243. Residues 1706 to 1783 (MQIRDFTQLH…KMQESNHLLL (78 aa)) are a coiled coil. Laminin G-like domains lie at 2117–2297 (KVAV…CRGC), 2305–2481 (DPSF…RKGC), 2486–2673 (IRSV…LDTC), 2713–2885 (AHQF…VNRC), and 2890–3070 (QEGT…LHSC). Cystine bridges form between C2271-C2297 and C2457-C2481. A Cell attachment site motif is present at residues 2534–2536 (RGD). 3 disulfides stabilise this stretch: C2646/C2673, C2860/C2885, and C3039/C3070.

As to quaternary structure, laminin is a complex glycoprotein, consisting of three different polypeptide chains (alpha, beta, gamma), which are bound to each other by disulfide bonds into a cross-shaped molecule comprising one long and three short arms with globules at each end. Alpha-1 is a subunit of laminin-1 (laminin-111 or EHS laminin) and laminin-3 (laminin-121 or S-laminin). Post-translationally, tyrosine phosphorylated by PKDCC/VLK.

The protein localises to the secreted. Its subcellular location is the extracellular space. The protein resides in the extracellular matrix. It localises to the basement membrane. Functionally, binding to cells via a high affinity receptor, laminin is thought to mediate the attachment, migration and organization of cells into tissues during embryonic development by interacting with other extracellular matrix components. This Homo sapiens (Human) protein is Laminin subunit alpha-1 (LAMA1).